Here is a 283-residue protein sequence, read N- to C-terminus: Protein boule-like (283 aa).

Residues 1–25 (MQTDSLSPSPNPVSPVPLNNPTSAP) form a disordered region. The RRM domain maps to 33 to 110 (NRIFVGGIDF…KKLNIGPAIR (78 aa)). The DAZ domain maps to 160 to 184 (PSRSVCSSPVMVAQPIYQQPAYHYQ).

It belongs to the RRM DAZ family. Interacts with DAZ1 and DAZL.

The protein localises to the cytoplasm. Probable RNA-binding protein, which may be required during spermatogenesis. May act by binding to the 3'-UTR of mRNAs and regulating their translation. This Macaca fascicularis (Crab-eating macaque) protein is Protein boule-like (BOLL).